The following is a 236-amino-acid chain: Ribose-5-phosphate isomerase A (236 aa).

Residues 29–32 (SGST), 86–89 (DGAD), and 99–102 (KGGG) each bind substrate. E108 (proton acceptor) is an active-site residue. Residue K126 coordinates substrate.

This sequence belongs to the ribose 5-phosphate isomerase family. As to quaternary structure, homodimer.

It carries out the reaction aldehydo-D-ribose 5-phosphate = D-ribulose 5-phosphate. It participates in carbohydrate degradation; pentose phosphate pathway; D-ribose 5-phosphate from D-ribulose 5-phosphate (non-oxidative stage): step 1/1. In terms of biological role, catalyzes the reversible conversion of ribose-5-phosphate to ribulose 5-phosphate. The polypeptide is Ribose-5-phosphate isomerase A (Prochlorococcus marinus (strain NATL2A)).